A 306-amino-acid polypeptide reads, in one-letter code: Ribonuclease Z (306 aa).

Residues histidine 63, histidine 65, aspartate 67, histidine 68, histidine 141, aspartate 211, and histidine 269 each contribute to the Zn(2+) site. Residue aspartate 67 is the Proton acceptor of the active site.

The protein belongs to the RNase Z family. As to quaternary structure, homodimer. Zn(2+) serves as cofactor.

It carries out the reaction Endonucleolytic cleavage of RNA, removing extra 3' nucleotides from tRNA precursor, generating 3' termini of tRNAs. A 3'-hydroxy group is left at the tRNA terminus and a 5'-phosphoryl group is left at the trailer molecule.. Zinc phosphodiesterase, which displays some tRNA 3'-processing endonuclease activity. Probably involved in tRNA maturation, by removing a 3'-trailer from precursor tRNA. The chain is Ribonuclease Z from Staphylococcus epidermidis (strain ATCC 12228 / FDA PCI 1200).